A 455-amino-acid polypeptide reads, in one-letter code: Beta-glucosidase A (455 aa).

Glu-165 functions as the Proton donor in the catalytic mechanism. Residue Glu-363 is the Nucleophile of the active site.

The protein belongs to the glycosyl hydrolase 1 family.

The enzyme catalyses Hydrolysis of terminal, non-reducing beta-D-glucosyl residues with release of beta-D-glucose.. The sequence is that of Beta-glucosidase A (bglA) from Caldicellulosiruptor saccharolyticus (Caldocellum saccharolyticum).